The chain runs to 130 residues: Mitochondrial pyruvate carrier 1 (130 aa).

A run of 2 helical transmembrane segments spans residues 23-45 (LKYIFTTHFWGPVSNFGIPIAAI) and 55-77 (ISGPMTFALVTYSGVFMKYALSV).

Belongs to the mitochondrial pyruvate carrier (MPC) (TC 2.A.105) family. In terms of assembly, the functional 150 kDa pyruvate import complex is a heteromer of MPC1 and either MPC2 or MPC3.

Its subcellular location is the mitochondrion. It is found in the mitochondrion inner membrane. Its function is as follows. Mediates the uptake of pyruvate into mitochondria. The polypeptide is Mitochondrial pyruvate carrier 1 (Saccharomyces cerevisiae (strain ATCC 204508 / S288c) (Baker's yeast)).